A 196-amino-acid chain; its full sequence is Holliday junction branch migration complex subunit RuvA (196 aa).

The segment at 1 to 63 (MISFVSGRVA…EDSLTLYGFA (63 aa)) is domain I. Residues 64 to 136 (DDDERTVFEL…LKDRLGTPST (73 aa)) are domain II. A flexible linker region spans residues 136–140 (TAAAE). The interval 141–196 (STSGWRDAVHAGLLNLGYTARQADEAIAAIAGELDDSAAVDTATALRLALATLKRP) is domain III.

This sequence belongs to the RuvA family. Homotetramer. Forms an RuvA(8)-RuvB(12)-Holliday junction (HJ) complex. HJ DNA is sandwiched between 2 RuvA tetramers; dsDNA enters through RuvA and exits via RuvB. An RuvB hexamer assembles on each DNA strand where it exits the tetramer. Each RuvB hexamer is contacted by two RuvA subunits (via domain III) on 2 adjacent RuvB subunits; this complex drives branch migration. In the full resolvosome a probable DNA-RuvA(4)-RuvB(12)-RuvC(2) complex forms which resolves the HJ.

It localises to the cytoplasm. In terms of biological role, the RuvA-RuvB-RuvC complex processes Holliday junction (HJ) DNA during genetic recombination and DNA repair, while the RuvA-RuvB complex plays an important role in the rescue of blocked DNA replication forks via replication fork reversal (RFR). RuvA specifically binds to HJ cruciform DNA, conferring on it an open structure. The RuvB hexamer acts as an ATP-dependent pump, pulling dsDNA into and through the RuvAB complex. HJ branch migration allows RuvC to scan DNA until it finds its consensus sequence, where it cleaves and resolves the cruciform DNA. The sequence is that of Holliday junction branch migration complex subunit RuvA from Acidothermus cellulolyticus (strain ATCC 43068 / DSM 8971 / 11B).